The primary structure comprises 459 residues: UDP-N-acetylmuramate--L-alanine ligase (459 aa).

118 to 124 (GTHGKTT) contacts ATP.

Belongs to the MurCDEF family.

It is found in the cytoplasm. The catalysed reaction is UDP-N-acetyl-alpha-D-muramate + L-alanine + ATP = UDP-N-acetyl-alpha-D-muramoyl-L-alanine + ADP + phosphate + H(+). Its pathway is cell wall biogenesis; peptidoglycan biosynthesis. Its function is as follows. Cell wall formation. This chain is UDP-N-acetylmuramate--L-alanine ligase, found in Agathobacter rectalis (strain ATCC 33656 / DSM 3377 / JCM 17463 / KCTC 5835 / VPI 0990) (Eubacterium rectale).